We begin with the raw amino-acid sequence, 167 residues long: uncharacterized protein (167 aa).

Helical transmembrane passes span 21-41 and 87-107; these read KIGLAIFLIGAFINLIHIYKP and MIITFILVQTTLITLDLYVFG. Residues 136–159 show a composition bias toward basic and acidic residues; that stretch reads RKQRLKEQREKKEQKKEQKKEKKT. Residues 136 to 167 are disordered; sequence RKQRLKEQREKKEQKKEQKKEKKTERRKKKKL.

Its subcellular location is the membrane. This is an uncharacterized protein from Schizosaccharomyces pombe (strain 972 / ATCC 24843) (Fission yeast).